Here is a 149-residue protein sequence, read N- to C-terminus: Globin (149 aa).

The 148-residue stretch at 2–149 (VLTKDEFDSL…KIFTGVAGQL (148 aa)) folds into the Globin domain. A heme-binding site is contributed by His100.

This sequence belongs to the globin family. In terms of assembly, monomer.

Oxygen binding protein. This Isoparorchis hypselobagri (Giant trematode) protein is Globin.